The sequence spans 340 residues: MREQLEALRDEALQLVNQASTQKELNDVRVKYLGKKGPITEVLRGMGKLSAEERPVVGEIANAVRSVIQTELEQRLVDVKQQEMDAKLALEAIDVTLPGRPKQVGQAHLLQQVTDEIEDIFVGLGYTIAEGPEVEQDLFNFEMLNLPKDHPARDMQDSFYITDEILMRTHTSPVQARTMLASKGEPIRILCPGKVYRRDEDDATHSHQFMQVEGLVVGEEISMADLKGTLEAFVKQMFGEAREIRLRPSFFPFTEPSVEVDVSCFKCGGKGCNICKQTGWIEILGAGMVHPHVLEMAEYDSTKMSGFAFGMGIERIAMLKYGVDDIRHFYTNDVRFSEQF.

Glu255 provides a ligand contact to Mg(2+).

Belongs to the class-II aminoacyl-tRNA synthetase family. Phe-tRNA synthetase alpha subunit type 1 subfamily. As to quaternary structure, tetramer of two alpha and two beta subunits. Mg(2+) serves as cofactor.

The protein localises to the cytoplasm. The catalysed reaction is tRNA(Phe) + L-phenylalanine + ATP = L-phenylalanyl-tRNA(Phe) + AMP + diphosphate + H(+). The sequence is that of Phenylalanine--tRNA ligase alpha subunit from Exiguobacterium sibiricum (strain DSM 17290 / CCUG 55495 / CIP 109462 / JCM 13490 / 255-15).